A 208-amino-acid chain; its full sequence is Small ribosomal subunit protein uS4 (208 aa).

In terms of domain architecture, S4 RNA-binding spans 98-161; the sequence is QRLDNLVYRM…KNNPQILRAV (64 aa).

Belongs to the universal ribosomal protein uS4 family. In terms of assembly, part of the 30S ribosomal subunit. Contacts protein S5. The interaction surface between S4 and S5 is involved in control of translational fidelity.

Functionally, one of the primary rRNA binding proteins, it binds directly to 16S rRNA where it nucleates assembly of the body of the 30S subunit. In terms of biological role, with S5 and S12 plays an important role in translational accuracy. The sequence is that of Small ribosomal subunit protein uS4 from Campylobacter hominis (strain ATCC BAA-381 / DSM 21671 / CCUG 45161 / LMG 19568 / NCTC 13146 / CH001A).